Here is a 249-residue protein sequence, read N- to C-terminus: Nodulation protein H (249 aa).

In terms of biological role, required for the formation of sulfated nod factor. Proposed to transfer activated sulfate (PAPS) to a N-acetylglucosamine of the nod factor. The sequence is that of Nodulation protein H (nodH) from Rhizobium tropici.